A 413-amino-acid polypeptide reads, in one-letter code: Putative adhesin P1-like protein MPN_144 (413 aa).

3 stretches are compositionally biased toward polar residues: residues 1–13, 25–54, and 355–376; these read MGQQ…SAGN, SGDS…NLTP, and SFGT…VFGT. Disordered regions lie at residues 1 to 60 and 355 to 413; these read MGQQ…DWPN and SFGT…VSGH. Gly residues predominate over residues 385-399; that stretch reads LSGGGAGGGSSGSGQ.

Belongs to the adhesin P1 family.

The polypeptide is Putative adhesin P1-like protein MPN_144 (Mycoplasma pneumoniae (strain ATCC 29342 / M129 / Subtype 1) (Mycoplasmoides pneumoniae)).